Reading from the N-terminus, the 261-residue chain is Triosephosphate isomerase (261 aa).

10-12 provides a ligand contact to substrate; it reads NWK. H100 acts as the Electrophile in catalysis. Catalysis depends on E172, which acts as the Proton acceptor. Residues G178, S218, and 239–240 contribute to the substrate site; that span reads GG.

This sequence belongs to the triosephosphate isomerase family. Homodimer.

It localises to the cytoplasm. The catalysed reaction is D-glyceraldehyde 3-phosphate = dihydroxyacetone phosphate. It functions in the pathway carbohydrate biosynthesis; gluconeogenesis. The protein operates within carbohydrate degradation; glycolysis; D-glyceraldehyde 3-phosphate from glycerone phosphate: step 1/1. In terms of biological role, involved in the gluconeogenesis. Catalyzes stereospecifically the conversion of dihydroxyacetone phosphate (DHAP) to D-glyceraldehyde-3-phosphate (G3P). The polypeptide is Triosephosphate isomerase (Nocardia farcinica (strain IFM 10152)).